A 131-amino-acid chain; its full sequence is Holo-[acyl-carrier-protein] synthase (131 aa).

Mg(2+) is bound by residues Asp8 and Glu59.

The protein belongs to the P-Pant transferase superfamily. AcpS family. Mg(2+) serves as cofactor.

It is found in the cytoplasm. The catalysed reaction is apo-[ACP] + CoA = holo-[ACP] + adenosine 3',5'-bisphosphate + H(+). Transfers the 4'-phosphopantetheine moiety from coenzyme A to a Ser of acyl-carrier-protein. The protein is Holo-[acyl-carrier-protein] synthase of Rickettsia africae (strain ESF-5).